Consider the following 308-residue polypeptide: Phenylcoumaran benzylic ether reductase PT1 (308 aa).

NADP(+)-binding positions include 11–17 (GATGYIG), Arg36, and Lys46. The active-site Proton acceptor is Lys134. Position 138 (Arg138) interacts with NADP(+).

Belongs to the NmrA-type oxidoreductase family. Isoflavone reductase subfamily.

The enzyme catalyses (-)-dehydrodiconiferyl alcohol + NADPH + H(+) = (S)-isodihydrodehydrodiconiferyl alcohol + NADP(+). It catalyses the reaction (+)-dehydrodiconiferyl alcohol + NADPH + H(+) = (R)-isodihydrodehydrodiconiferyl alcohol + NADP(+). It carries out the reaction (2R,3S)-dihydrodehydrodiconiferyl alcohol + NADPH + H(+) = (S)-tetrahydrodehydrodiconiferyl alcohol + NADP(+). The catalysed reaction is (2S,3R)-dihydrodehydrodiconiferyl alcohol + NADPH + H(+) = (R)-tetrahydrodehydrodiconiferyl alcohol + NADP(+). Functionally, oxidoreductase involved in lignan biosynthesis. Catalyzes the NADPH-dependent reduction of phenylcoumaran benzylic ethers. Converts dehydrodiconiferyl alcohol (DDC) to isodihydrodehydrodiconiferyl alcohol (IDDDC), and dihydrodehydrodiconiferyl alcohol (DDDC) to tetrahydrodehydrodiconiferyl alcohol (TDDC). The protein is Phenylcoumaran benzylic ether reductase PT1 of Pinus taeda (Loblolly pine).